Reading from the N-terminus, the 351-residue chain is D-glucoside 3-dehydrogenase (351 aa).

It belongs to the Gfo/Idh/MocA family.

It catalyses the reaction a D-glucoside + NAD(+) = a 3-dehydro-D-glucoside + NADH + H(+). Catalyzes the NADH-dependent reduction of the oxo group at C3 of 3-dehydro-D-glucosides leading to D-glucosides. Probably functions in a metabolic pathway that transforms D-gulosides to D-glucosides. Can use 3-dehydro-D-glucose, methyl alpha-3-dehydro-D-glucoside and methyl beta-3-dehydro-D-glucoside as substrates in vitro. However, the actual specific physiological substrates for this metabolic pathway are unknown. To a lesser extent, is also able to catalyze the reverse reactions, i.e. the NAD(+)-dependent oxidation of the hydroxyl group at C3 of D-glucosides leading to 3-dehydro-D-glucosides. Cannot act on UDP-glucose, UDP-N-acetyl-D-glucosamine, D-glucosamine, N-acetyl-D-glucosamine, or UDP-D-galactose. This is D-glucoside 3-dehydrogenase (ycjS) from Escherichia coli (strain K12).